A 142-amino-acid chain; its full sequence is Hemoglobin subunit alpha (142 aa).

The Globin domain maps to 2 to 142 (VLSADDKANI…VSTVLTSKYR (141 aa)). Ser-4 is modified (phosphoserine). N6-succinyllysine occurs at positions 8 and 12. Lys-17 carries the post-translational modification N6-acetyllysine; alternate. Residue Lys-17 is modified to N6-succinyllysine; alternate. The residue at position 25 (Tyr-25) is a Phosphotyrosine. Residue Ser-36 is modified to Phosphoserine. Position 41 is an N6-succinyllysine (Lys-41). Position 50 is a phosphoserine (Ser-50). His-59 is an O2 binding site. His-88 contributes to the heme b binding site. The residue at position 109 (Thr-109) is a Phosphothreonine. A phosphoserine mark is found at Ser-125 and Ser-132. A phosphothreonine mark is found at Thr-135 and Thr-138. Ser-139 carries the phosphoserine modification.

This sequence belongs to the globin family. In terms of assembly, heterotetramer of two alpha chains and two beta chains. As to expression, red blood cells.

Involved in oxygen transport from the lung to the various peripheral tissues. Functionally, hemopressin acts as an antagonist peptide of the cannabinoid receptor CNR1. Hemopressin-binding efficiently blocks cannabinoid receptor CNR1 and subsequent signaling. In Cricetomys gambianus (Northern giant pouched rat), this protein is Hemoglobin subunit alpha (HBA).